The primary structure comprises 259 residues: MRILVTNDDGIYSNGIRAAVKALSSLGEVYVVAPLFQRSASGRAMTLHRPIRARLVDVPGAKVAYGIDGTPTDSVIFALARFGDFDLAVSGINLGENLSTEITVSGTASAAIEAATHEVPSIAISLEVDWKKTLGEGEGIDFSVASHFLKRITRAVLEKGLPEGVDMLNVNVPSNATPETEIAITRLARKRYCPTIEERVDPRGHPYYWIVGQKREEFEPGTDAYALKIERKVSVTPINIDMTARVNFEEVRKVLFAQP.

A divalent metal cation contacts are provided by Asp8, Asp9, Ser39, and Asn93.

It belongs to the SurE nucleotidase family. Requires a divalent metal cation as cofactor.

It localises to the cytoplasm. The enzyme catalyses a ribonucleoside 5'-phosphate + H2O = a ribonucleoside + phosphate. Functionally, nucleotidase that shows phosphatase activity on nucleoside 5'-monophosphates. This chain is 5'-nucleotidase SurE, found in Thermococcus kodakarensis (strain ATCC BAA-918 / JCM 12380 / KOD1) (Pyrococcus kodakaraensis (strain KOD1)).